Here is a 499-residue protein sequence, read N- to C-terminus: Bifunctional purine biosynthesis protein PurH (499 aa).

Positions 1-144 (MIKRALISVF…KNFQDVVVLT (144 aa)) constitute an MGS-like domain.

It belongs to the PurH family.

The enzyme catalyses (6R)-10-formyltetrahydrofolate + 5-amino-1-(5-phospho-beta-D-ribosyl)imidazole-4-carboxamide = 5-formamido-1-(5-phospho-D-ribosyl)imidazole-4-carboxamide + (6S)-5,6,7,8-tetrahydrofolate. It catalyses the reaction IMP + H2O = 5-formamido-1-(5-phospho-D-ribosyl)imidazole-4-carboxamide. Its pathway is purine metabolism; IMP biosynthesis via de novo pathway; 5-formamido-1-(5-phospho-D-ribosyl)imidazole-4-carboxamide from 5-amino-1-(5-phospho-D-ribosyl)imidazole-4-carboxamide (10-formyl THF route): step 1/1. The protein operates within purine metabolism; IMP biosynthesis via de novo pathway; IMP from 5-formamido-1-(5-phospho-D-ribosyl)imidazole-4-carboxamide: step 1/1. The polypeptide is Bifunctional purine biosynthesis protein PurH (Clostridium acetobutylicum (strain ATCC 824 / DSM 792 / JCM 1419 / IAM 19013 / LMG 5710 / NBRC 13948 / NRRL B-527 / VKM B-1787 / 2291 / W)).